The following is an 832-amino-acid chain: Adhesin AWP2 (832 aa).

A signal peptide spans 1 to 25; it reads MRKLPLFMAWKFWLICLYIIKVAST. Asparagine 187, asparagine 290, asparagine 372, asparagine 390, asparagine 435, asparagine 448, asparagine 472, asparagine 482, asparagine 507, asparagine 512, asparagine 515, asparagine 534, asparagine 562, asparagine 579, asparagine 695, and asparagine 721 each carry an N-linked (GlcNAc...) asparagine glycan. The disordered stretch occupies residues 722–747; the sequence is QTTSPSMHTTSLVGSENGVSAKTVND.

The protein resides in the secreted. The protein localises to the cell wall. Functionally, mediates cell-substrate adhesion and promotes biofilm formation. This is Adhesin AWP2 from Candida glabrata (strain ATCC 2001 / BCRC 20586 / JCM 3761 / NBRC 0622 / NRRL Y-65 / CBS 138) (Yeast).